A 488-amino-acid polypeptide reads, in one-letter code: Peptidoglycan endopeptidase LytF (488 aa).

A signal peptide spans 1-26 (MKKKLAAGLTASAIVGTTLVVTPAEA). 2 consecutive LysM domains span residues 27–70 (ATIK…TLTI) and 92–135 (SVYT…KLKV). 3 disordered regions span residues 70-93 (IPGSKSSTSSSTSSSTTKKSGSSV), 137-176 (GTVSSSSSSSKKSNSNKSSSSSSKSSSNKSSSSSSSTGTY), and 218-239 (KSSGSDTSSKDNSSKSNQTSAT). Low complexity-rich tracts occupy residues 72 to 93 (GSKSSTSSSTSSSTTKKSGSSV) and 140 to 172 (SSSSSSSKKSNSNKSSSSSSKSSSNKSSSSSSS). The LysM 3 domain occupies 174–217 (GTYKVQLGDSLWKIANKVNMSIAELKVLNNLKSDTIYVNQVLKT). The 44-residue stretch at 240–283 (TKYTVKSGDSLWKIANNYNLTVQQIRNINNLKSDVLYVGQVLKL) folds into the LysM 4 domain. Positions 286-306 (KASSGSSSSSSSSSNASSGTT) are disordered. The LysM 5 domain occupies 307–350 (TTYTVKSGDSLWVIAQKFNVTAQQIREKNNLKTDVLQVGQKLVI). The region spanning 370-488 (SAKINTMISA…QRYLGAKRYF (119 aa)) is the NlpC/P60 domain. Cys400 functions as the Nucleophile in the catalytic mechanism. His449 serves as the catalytic Proton acceptor. Residue Asn461 is part of the active site.

Belongs to the peptidase C40 family.

Its subcellular location is the secreted. The protein localises to the cell wall. Its activity is regulated as follows. Is inhibited in vitro by para-hydroxymercuribenzoate, a sulfydryl inhibitor. Cell wall hydrolase that cleaves gamma-D-glutamate-meso-diaminopimelate bonds in peptidoglycan. LytF is necessary and sufficient for vegetative daughter cell separation, and also seems to play a role in cell autolysis. In Bacillus subtilis (strain 168), this protein is Peptidoglycan endopeptidase LytF (lytF).